The primary structure comprises 307 residues: 17-beta-hydroxysteroid dehydrogenase type 3 (307 aa).

The chain crosses the membrane as a helical span at residues 6–26; that stretch reads IIFVLTGTCAILVFGGKIASL. 47-76 provides a ligand contact to NADP(+); sequence GKWAVITGGSDGIGRAYAEELSKQGMSVII. S187 lines the substrate pocket. Y200 serves as the catalytic Proton acceptor.

This sequence belongs to the short-chain dehydrogenases/reductases (SDR) family. In terms of tissue distribution, expression shows strong sexual dimorphism. In female, highly expressed in ovaries, and at lower levels in skin muscle, eyes and liver. In males, strongly expressed in liver and at lower levels in testis, spleen, kidney, intestine and muscle.

It localises to the endoplasmic reticulum. It is found in the membrane. The catalysed reaction is a 17beta-hydroxy steroid + NADP(+) = a 17-oxo steroid + NADPH + H(+). It catalyses the reaction testosterone + NADP(+) = androst-4-ene-3,17-dione + NADPH + H(+). It carries out the reaction 3beta-hydroxyandrost-5-en-17-one + NADPH + H(+) = androst-5-en-3beta,17beta-diol + NADP(+). The enzyme catalyses 3beta-hydroxy-5alpha-androstan-17-one + NADPH + H(+) = 5alpha-androstane-3beta,17beta-diol + NADP(+). The catalysed reaction is androst-4-ene-3,11,17-trione + NADPH + H(+) = 17beta-hydroxyandrost-4-ene-3,11-dione + NADP(+). It catalyses the reaction 11beta-hydroxyandrost-4-ene-3,17-dione + NADPH + H(+) = 11beta,17beta-dihydroxyandrost-4-ene-3-one + NADP(+). It functions in the pathway hormone biosynthesis; testosterone biosynthesis. The protein operates within steroid metabolism. In terms of biological role, catalyzes the conversion of 17-oxosteroids to 17beta-hydroxysteroids in the presence of NADPH. Favors the reduction of androstenedione to testosterone. Testosterone is the key androgen driving male development and function. Among further tested androgens epiandrosterone and dehydroepiandrosterone are accepted as substrates and reduced at C-17. Can also reduce 11-ketoandrostenedione as well as 11beta-hydroxyandrostenedione at C-17 to the respective testosterone forms. Cannot use androsterone and androstanedione as substrates. In Danio rerio (Zebrafish), this protein is 17-beta-hydroxysteroid dehydrogenase type 3 (hsd17b3).